Consider the following 93-residue polypeptide: Large ribosomal subunit protein eL37A (93 aa).

Residues Cys19, Cys22, Cys34, and Cys37 each coordinate Zn(2+). The C4-type zinc-finger motif lies at 19-37; it reads CRRCGRSSYHIQKSTCAQC.

This sequence belongs to the eukaryotic ribosomal protein eL37 family. Requires Zn(2+) as cofactor.

In terms of biological role, binds to the 23S rRNA. The chain is Large ribosomal subunit protein eL37A from Drosophila melanogaster (Fruit fly).